We begin with the raw amino-acid sequence, 355 residues long: 3-dehydroquinate synthase (355 aa).

Residues 105-109 (GVVGD), 129-130 (TS), lysine 142, lysine 151, and 169-172 (TLKT) each bind NAD(+). Glutamate 184, histidine 246, and histidine 263 together coordinate Zn(2+).

It belongs to the sugar phosphate cyclases superfamily. Dehydroquinate synthase family. The cofactor is Co(2+). Zn(2+) is required as a cofactor. NAD(+) serves as cofactor.

Its subcellular location is the cytoplasm. It catalyses the reaction 7-phospho-2-dehydro-3-deoxy-D-arabino-heptonate = 3-dehydroquinate + phosphate. It participates in metabolic intermediate biosynthesis; chorismate biosynthesis; chorismate from D-erythrose 4-phosphate and phosphoenolpyruvate: step 2/7. Functionally, catalyzes the conversion of 3-deoxy-D-arabino-heptulosonate 7-phosphate (DAHP) to dehydroquinate (DHQ). This is 3-dehydroquinate synthase from Streptococcus agalactiae serotype Ia (strain ATCC 27591 / A909 / CDC SS700).